We begin with the raw amino-acid sequence, 144 residues long: Large ribosomal subunit protein uL15 (144 aa).

Over residues 1–18 (MRLNDLHPAEGSRPEGKR) the composition is skewed to basic and acidic residues. The interval 1–58 (MRLNDLHPAEGSRPEGKRVGRGIGSGLGKTGGRGHKGQKSRSGGSVKPGFEGGQMPLQ) is disordered. The segment covering 21-31 (RGIGSGLGKTG) has biased composition (gly residues).

The protein belongs to the universal ribosomal protein uL15 family. Part of the 50S ribosomal subunit.

Binds to the 23S rRNA. The protein is Large ribosomal subunit protein uL15 of Alcanivorax borkumensis (strain ATCC 700651 / DSM 11573 / NCIMB 13689 / SK2).